We begin with the raw amino-acid sequence, 784 residues long: Lon protease (784 aa).

A Lon N-terminal domain is found at Leu6–Ile207. Gly356–Thr363 is a binding site for ATP. In terms of domain architecture, Lon proteolytic spans Glu592–Glu773. Catalysis depends on residues Ser679 and Lys722.

The protein belongs to the peptidase S16 family. As to quaternary structure, homohexamer. Organized in a ring with a central cavity.

The protein localises to the cytoplasm. It carries out the reaction Hydrolysis of proteins in presence of ATP.. Functionally, ATP-dependent serine protease that mediates the selective degradation of mutant and abnormal proteins as well as certain short-lived regulatory proteins. Required for cellular homeostasis and for survival from DNA damage and developmental changes induced by stress. Degrades polypeptides processively to yield small peptide fragments that are 5 to 10 amino acids long. Binds to DNA in a double-stranded, site-specific manner. In Rickettsia typhi (strain ATCC VR-144 / Wilmington), this protein is Lon protease.